Consider the following 505-residue polypeptide: Maturase K (505 aa).

Belongs to the intron maturase 2 family. MatK subfamily.

The protein localises to the plastid. The protein resides in the chloroplast. Functionally, usually encoded in the trnK tRNA gene intron. Probably assists in splicing its own and other chloroplast group II introns. This Rosa stellata (Star rose) protein is Maturase K.